Here is a 303-residue protein sequence, read N- to C-terminus: Tyrosine recombinase XerC (303 aa).

Positions 6 to 92 (ASLAPQVEAF…ALRSFLNWLV (87 aa)) constitute a Core-binding (CB) domain. One can recognise a Tyr recombinase domain in the interval 113-292 (HLPKNIDVDE…DFQHLATVYD (180 aa)). Active-site residues include arginine 152, lysine 176, histidine 244, arginine 247, and histidine 270. Tyrosine 279 (O-(3'-phospho-DNA)-tyrosine intermediate) is an active-site residue.

It belongs to the 'phage' integrase family. XerC subfamily. As to quaternary structure, forms a cyclic heterotetrameric complex composed of two molecules of XerC and two molecules of XerD, in which XerC interacts with XerD via its C-terminal region, XerD interacts with XerC via its C-terminal region and so on.

Its subcellular location is the cytoplasm. With respect to regulation, ftsK may regulate the catalytic switch between XerC and XerD in the heterotetrameric complex during the two steps of the recombination process. Functionally, site-specific tyrosine recombinase, which acts by catalyzing the cutting and rejoining of the recombining DNA molecules. Binds cooperatively to specific DNA consensus sequences that are separated from XerD binding sites by a short central region, forming the heterotetrameric XerC-XerD complex that recombines DNA substrates. The complex is essential to convert dimers of the bacterial chromosome into monomers to permit their segregation at cell division. It also contributes to the segregational stability of plasmids. In the complex XerC specifically exchanges the top DNA strands. The polypeptide is Tyrosine recombinase XerC (Yersinia pestis).